Here is a 252-residue protein sequence, read N- to C-terminus: MIKLEVCCYSVDCALTAERAGADRIELCASPSEGGLTPSYGSLRLARDRVSVPVHPIIRPRGGDFCYGAVDFDVIKHDIAQIRDMGFAGVVVGMLDEEGHIDLQRMREVMRLSGNMAVTFHRAFDMCQNPMVALSQLTQLGVARILTSGQQQNAELGLPLLRDLLQASQGPVIMAGAGVRLSNLHKFVDIGIQELHSSSGHAVPSTMRYRKAGVTMCSDSEFDEFSHYCVDGEMVEAMKNSLALVDPLVQSA.

It belongs to the CutC family.

It localises to the cytoplasm. The polypeptide is PF03932 family protein CutC (Serratia proteamaculans (strain 568)).